The chain runs to 166 residues: MAFVTTAEVCDANQEMIRSGQLRALQPVFQIYGRRQIFSGPVVTVKVFEDNGLIRHFLEEKGNGRVLVVDGGGSLRCAILGGNPVVQAQNNGWAGIIVNGCIRDVDEINGCDIGVRALASHPIKASKKGLGEQRVSLNIAGTRICDGEWLYADTDGILVSQIELSV.

Ala2 is subject to N-acetylalanine. Substrate is bound by residues 81 to 84 and Arg103; that span reads GGNP. Asp104 is a binding site for a divalent metal cation.

Belongs to the class II aldolase/RraA-like family. Homotrimer. A divalent metal cation is required as a cofactor.

It carries out the reaction 4-hydroxy-4-methyl-2-oxoglutarate = 2 pyruvate. It catalyses the reaction oxaloacetate + H(+) = pyruvate + CO2. In terms of biological role, catalyzes the aldol cleavage of 4-hydroxy-4-methyl-2-oxoglutarate (HMG) into 2 molecules of pyruvate. Also contains a secondary oxaloacetate (OAA) decarboxylase activity due to the common pyruvate enolate transition state formed following C-C bond cleavage in the retro-aldol and decarboxylation reactions. This chain is Putative 4-hydroxy-4-methyl-2-oxoglutarate aldolase 1, found in Arabidopsis thaliana (Mouse-ear cress).